The chain runs to 582 residues: 2-isopropylmalate synthase (582 aa).

Positions 40–314 (PRWCAVDLRD…DPMIDFSDID (275 aa)) constitute a Pyruvate carboxyltransferase domain. Residues aspartate 49, histidine 253, histidine 255, and asparagine 289 each contribute to the Mg(2+) site. The segment at 456–582 (SPAGHPGGQW…NRAIRDNQVD (127 aa)) is regulatory domain.

The protein belongs to the alpha-IPM synthase/homocitrate synthase family. LeuA type 2 subfamily. In terms of assembly, homodimer. Mg(2+) is required as a cofactor.

Its subcellular location is the cytoplasm. The enzyme catalyses 3-methyl-2-oxobutanoate + acetyl-CoA + H2O = (2S)-2-isopropylmalate + CoA + H(+). It participates in amino-acid biosynthesis; L-leucine biosynthesis; L-leucine from 3-methyl-2-oxobutanoate: step 1/4. Its function is as follows. Catalyzes the condensation of the acetyl group of acetyl-CoA with 3-methyl-2-oxobutanoate (2-ketoisovalerate) to form 3-carboxy-3-hydroxy-4-methylpentanoate (2-isopropylmalate). The protein is 2-isopropylmalate synthase of Renibacterium salmoninarum (strain ATCC 33209 / DSM 20767 / JCM 11484 / NBRC 15589 / NCIMB 2235).